Here is a 492-residue protein sequence, read N- to C-terminus: Regulatory protein ViaA (492 aa).

The protein belongs to the ViaA family. In terms of assembly, homodimer. Interacts with RavA.

It localises to the cytoplasm. In terms of biological role, component of the RavA-ViaA chaperone complex, which may act on the membrane to optimize the function of some of the respiratory chains. ViaA stimulates the ATPase activity of RavA. This chain is Regulatory protein ViaA, found in Pectobacterium atrosepticum (strain SCRI 1043 / ATCC BAA-672) (Erwinia carotovora subsp. atroseptica).